Here is a 376-residue protein sequence, read N- to C-terminus: Mitogen-activated protein kinase 5 (376 aa).

One can recognise a Protein kinase domain in the interval 43 to 329; sequence VPPIRPIGRG…VEEALCYPYL (287 aa). ATP is bound by residues 49–57 and Lys72; that span reads IGRGAYGFV. Residue Asp169 is the Proton acceptor of the active site. Thr201 is modified (phosphothreonine). The TXY motif lies at 201–203; sequence TEY. Tyr203 carries the phosphotyrosine modification. Thr206 is modified (phosphothreonine).

Belongs to the protein kinase superfamily. CMGC Ser/Thr protein kinase family. MAP kinase subfamily. Post-translationally, autophosphorylated on threonine and tyrosine residues. Dually phosphorylated on Thr-201 and Tyr-203, which activates the enzyme.

The catalysed reaction is L-seryl-[protein] + ATP = O-phospho-L-seryl-[protein] + ADP + H(+). It carries out the reaction L-threonyl-[protein] + ATP = O-phospho-L-threonyl-[protein] + ADP + H(+). With respect to regulation, activated by threonine and tyrosine phosphorylation. Activated by the MAP kinase kinase MKK2. Activated by the MAP kinase kinase MKK6 in vitro. This Arabidopsis thaliana (Mouse-ear cress) protein is Mitogen-activated protein kinase 5 (MPK5).